Consider the following 374-residue polypeptide: D-amino-acid oxidase 3 (374 aa).

A signal peptide spans 1–19 (MVKYDAIILGSGVLGLSIA). FAD contacts are provided by Ser11, Leu14, Lys34, Asp35, Ala46, Ser47, and Gly51. The N-linked (GlcNAc...) asparagine glycan is linked to Asn180. Cys214 and Cys271 are disulfide-bonded. Residues Tyr229, Tyr246, and Arg296 each contribute to the (R)-lactate site. Anthranilate is bound by residues Tyr229, Tyr246, and Arg296. Residues Arg296, Gly342, Gly345, Tyr346, and Gln347 each coordinate FAD. The Microbody targeting signal motif lies at 372–374 (AKL).

It belongs to the DAMOX/DASOX family. It depends on FAD as a cofactor.

It localises to the peroxisome matrix. It catalyses the reaction a D-alpha-amino acid + O2 + H2O = a 2-oxocarboxylate + H2O2 + NH4(+). Functionally, catalyzes the oxidative deamination of D-amino acids with broad substrate specificity. Enables the organism to utilize D-amino acids as a source of nutrients. Enables the organism to utilize D-asparate and D-glutamate as a nitrogen source and may also contribute to utlization of D-tryptophan, D-tyrosine and D-asparagine as a nitrogen source. Protects the organism from the toxicity of D-amino acids, including from D-glutamate. May play a role in its interaction with the host. This chain is D-amino-acid oxidase 3, found in Cryptococcus deuterogattii (strain R265) (Cryptococcus gattii VGII (strain R265)).